Reading from the N-terminus, the 425-residue chain is Glutamyl-tRNA reductase (425 aa).

Substrate-binding positions include 49-52, S107, 112-114, and Q118; these read TCNR and EPQ. The Nucleophile role is filled by C50. Position 187–192 (187–192) interacts with NADP(+); it reads GAGETI.

This sequence belongs to the glutamyl-tRNA reductase family. As to quaternary structure, homodimer.

It catalyses the reaction (S)-4-amino-5-oxopentanoate + tRNA(Glu) + NADP(+) = L-glutamyl-tRNA(Glu) + NADPH + H(+). It participates in porphyrin-containing compound metabolism; protoporphyrin-IX biosynthesis; 5-aminolevulinate from L-glutamyl-tRNA(Glu): step 1/2. Catalyzes the NADPH-dependent reduction of glutamyl-tRNA(Glu) to glutamate 1-semialdehyde (GSA). The polypeptide is Glutamyl-tRNA reductase (Pseudomonas syringae pv. tomato (strain ATCC BAA-871 / DC3000)).